Consider the following 386-residue polypeptide: 8-amino-7-oxononanoate synthase (386 aa).

Substrate is bound at residue Arg-23. 110 to 111 is a binding site for pyridoxal 5'-phosphate; that stretch reads GY. His-135 provides a ligand contact to substrate. Pyridoxal 5'-phosphate is bound by residues Ser-181, His-209, and Thr-236. Lys-239 carries the N6-(pyridoxal phosphate)lysine modification. Thr-354 lines the substrate pocket.

The protein belongs to the class-II pyridoxal-phosphate-dependent aminotransferase family. BioF subfamily. Homodimer. Requires pyridoxal 5'-phosphate as cofactor.

It catalyses the reaction 6-carboxyhexanoyl-[ACP] + L-alanine + H(+) = (8S)-8-amino-7-oxononanoate + holo-[ACP] + CO2. It participates in cofactor biosynthesis; biotin biosynthesis. In terms of biological role, catalyzes the decarboxylative condensation of pimeloyl-[acyl-carrier protein] and L-alanine to produce 8-amino-7-oxononanoate (AON), [acyl-carrier protein], and carbon dioxide. The sequence is that of 8-amino-7-oxononanoate synthase from Thiobacillus denitrificans (strain ATCC 25259 / T1).